Reading from the N-terminus, the 223-residue chain is UPF0441 protein YgiB (223 aa).

The disordered stretch occupies residues 201-223; the sequence is ESVAKQSTMQRSAAGTSTRSMGG. Polar residues predominate over residues 204–223; sequence AKQSTMQRSAAGTSTRSMGG.

It belongs to the UPF0441 family.

The chain is UPF0441 protein YgiB from Salmonella gallinarum (strain 287/91 / NCTC 13346).